The sequence spans 303 residues: UDP-3-O-acyl-N-acetylglucosamine deacetylase (303 aa).

Histidine 78, histidine 237, and aspartate 241 together coordinate Zn(2+). Catalysis depends on histidine 264, which acts as the Proton donor.

It belongs to the LpxC family. Zn(2+) serves as cofactor.

The enzyme catalyses a UDP-3-O-[(3R)-3-hydroxyacyl]-N-acetyl-alpha-D-glucosamine + H2O = a UDP-3-O-[(3R)-3-hydroxyacyl]-alpha-D-glucosamine + acetate. It participates in glycolipid biosynthesis; lipid IV(A) biosynthesis; lipid IV(A) from (3R)-3-hydroxytetradecanoyl-[acyl-carrier-protein] and UDP-N-acetyl-alpha-D-glucosamine: step 2/6. In terms of biological role, catalyzes the hydrolysis of UDP-3-O-myristoyl-N-acetylglucosamine to form UDP-3-O-myristoylglucosamine and acetate, the committed step in lipid A biosynthesis. This chain is UDP-3-O-acyl-N-acetylglucosamine deacetylase, found in Xanthomonas euvesicatoria pv. vesicatoria (strain 85-10) (Xanthomonas campestris pv. vesicatoria).